The primary structure comprises 357 residues: MAKEKASSQEQEQKVKDEKLKQLNLAVESLEKQFGKGAIMRLGDDAVVQVPVVSTGSISLDYALGVGGLPKGRIVEIYGPESSGKTTLALHAIAEAQKAGGIAAFVDAEHAFDQSYARKLGIDIKSLLISQPESGEQALSITETLVRSGAVDIIVVDSVAALVPQAELEGEMGDSQMGLQARLMSQALRKLTGAISKSNCVAIFINQLRDKIGVMYGSPETTTGGKALKFYASVRLDIRKIAQIKDGTEIVGNRTKVKVVKNKVAPPFKTVEFDIIYGEGVSRIGELIDLAVELGIVKKAGAWFSYENDKLGQGRETVKTLLKADEALFNKIYAQVKEQMVGLKLEGSSDDDSSSDS.

79 to 86 contacts ATP; that stretch reads GPESSGKT.

It belongs to the RecA family.

The protein resides in the cytoplasm. Can catalyze the hydrolysis of ATP in the presence of single-stranded DNA, the ATP-dependent uptake of single-stranded DNA by duplex DNA, and the ATP-dependent hybridization of homologous single-stranded DNAs. It interacts with LexA causing its activation and leading to its autocatalytic cleavage. The chain is Protein RecA from Chloroherpeton thalassium (strain ATCC 35110 / GB-78).